We begin with the raw amino-acid sequence, 113 residues long: MATGETGIIGKGIVIKGNLTGGGDLVIEGRVEGQIALKNHLTIESTGKVQADIRAEELTINGEASGNIDASSRVAINASAKVAGDIKAPRVVIEDGAVFNGSIEMDVRLPDDI.

It belongs to the bactofilin family. As to quaternary structure, interacts with BacO and BacP, the 3 proteins colocalize as an extended structure.

It is found in the cytoplasm. The protein resides in the cytoskeleton. In terms of biological role, a non-essential component of the chromosome segregation machinery. Positions the ParA-ParB-parS chromosome segregation machinery within the cell; BacP seems to be the most important bactofilin in this process. Forms a heteropolymeric, subpolar scaffold in the cell; BacP probably forms the core, BacO contributes to position and integrity while BacN does not seem to contribute to assembly. This chain is Bactofilin BacN, found in Myxococcus xanthus (strain DK1622).